Reading from the N-terminus, the 198-residue chain is Recombination protein RecR (198 aa).

The C4-type zinc finger occupies 58 to 73; the sequence is CKVCQTLTDKEICPIC. The Toprim domain occupies 81-175; it reads KVIMVVENTR…KVSRIASGVP (95 aa).

Belongs to the RecR family.

In terms of biological role, may play a role in DNA repair. It seems to be involved in an RecBC-independent recombinational process of DNA repair. It may act with RecF and RecO. In Lachnoclostridium phytofermentans (strain ATCC 700394 / DSM 18823 / ISDg) (Clostridium phytofermentans), this protein is Recombination protein RecR.